A 178-amino-acid chain; its full sequence is ATP synthase subunit delta (178 aa).

This sequence belongs to the ATPase delta chain family. In terms of assembly, F-type ATPases have 2 components, F(1) - the catalytic core - and F(0) - the membrane proton channel. F(1) has five subunits: alpha(3), beta(3), gamma(1), delta(1), epsilon(1). F(0) has three main subunits: a(1), b(2) and c(10-14). The alpha and beta chains form an alternating ring which encloses part of the gamma chain. F(1) is attached to F(0) by a central stalk formed by the gamma and epsilon chains, while a peripheral stalk is formed by the delta and b chains.

Its subcellular location is the cell membrane. In terms of biological role, f(1)F(0) ATP synthase produces ATP from ADP in the presence of a proton or sodium gradient. F-type ATPases consist of two structural domains, F(1) containing the extramembraneous catalytic core and F(0) containing the membrane proton channel, linked together by a central stalk and a peripheral stalk. During catalysis, ATP synthesis in the catalytic domain of F(1) is coupled via a rotary mechanism of the central stalk subunits to proton translocation. Functionally, this protein is part of the stalk that links CF(0) to CF(1). It either transmits conformational changes from CF(0) to CF(1) or is implicated in proton conduction. The chain is ATP synthase subunit delta from Desulfitobacterium hafniense (strain DSM 10664 / DCB-2).